Reading from the N-terminus, the 660-residue chain is tRNA 5-methylaminomethyl-2-thiouridine biosynthesis bifunctional protein MnmC (660 aa).

The tract at residues 1–242 (MTDRIVPATL…KRAMLVGEFA (242 aa)) is tRNA (mnm(5)s(2)U34)-methyltransferase. The segment at 266–660 (IGAGLAGCAV…VRALRHGRVA (395 aa)) is FAD-dependent cmnm(5)s(2)U34 oxidoreductase.

This sequence in the N-terminal section; belongs to the methyltransferase superfamily. tRNA (mnm(5)s(2)U34)-methyltransferase family. The protein in the C-terminal section; belongs to the DAO family. The cofactor is FAD.

Its subcellular location is the cytoplasm. The catalysed reaction is 5-aminomethyl-2-thiouridine(34) in tRNA + S-adenosyl-L-methionine = 5-methylaminomethyl-2-thiouridine(34) in tRNA + S-adenosyl-L-homocysteine + H(+). Functionally, catalyzes the last two steps in the biosynthesis of 5-methylaminomethyl-2-thiouridine (mnm(5)s(2)U) at the wobble position (U34) in tRNA. Catalyzes the FAD-dependent demodification of cmnm(5)s(2)U34 to nm(5)s(2)U34, followed by the transfer of a methyl group from S-adenosyl-L-methionine to nm(5)s(2)U34, to form mnm(5)s(2)U34. This chain is tRNA 5-methylaminomethyl-2-thiouridine biosynthesis bifunctional protein MnmC, found in Burkholderia pseudomallei (strain 1106a).